A 701-amino-acid chain; its full sequence is Polyribonucleotide nucleotidyltransferase (701 aa).

Asp-490 and Asp-496 together coordinate Mg(2+). The 60-residue stretch at 557–616 (PKVVTMSINPDKIRDVIGPGGKKINEIIDETGVKLDIEQDGTIFIGAVDQAMINRAKEII) folds into the KH domain. The region spanning 626-694 (GQVYHAKVKR…KQGRVNASHK (69 aa)) is the S1 motif domain.

This sequence belongs to the polyribonucleotide nucleotidyltransferase family. It depends on Mg(2+) as a cofactor.

The protein resides in the cytoplasm. The enzyme catalyses RNA(n+1) + phosphate = RNA(n) + a ribonucleoside 5'-diphosphate. In terms of biological role, involved in mRNA degradation. Catalyzes the phosphorolysis of single-stranded polyribonucleotides processively in the 3'- to 5'-direction. The protein is Polyribonucleotide nucleotidyltransferase of Staphylococcus epidermidis (strain ATCC 12228 / FDA PCI 1200).